Here is a 345-residue protein sequence, read N- to C-terminus: NADH-ubiquinone oxidoreductase chain 2 (345 aa).

10 helical membrane passes run 1-21, 25-45, 56-76, 92-114, 149-171, 178-198, 200-220, 241-261, 274-294, and 324-344; these read MNPI…VITM, NLML…PMLI, ATKY…AIVL, GLIL…FHFW, LNST…GGLN, IMAY…PYNP, LTLL…MALM, LTMI…TGFL, NCLI…FFYT, and LMFS…PQLI.

Belongs to the complex I subunit 2 family. In terms of assembly, core subunit of respiratory chain NADH dehydrogenase (Complex I) which is composed of 45 different subunits. Interacts with TMEM242.

The protein localises to the mitochondrion inner membrane. The catalysed reaction is a ubiquinone + NADH + 5 H(+)(in) = a ubiquinol + NAD(+) + 4 H(+)(out). Its function is as follows. Core subunit of the mitochondrial membrane respiratory chain NADH dehydrogenase (Complex I) which catalyzes electron transfer from NADH through the respiratory chain, using ubiquinone as an electron acceptor. Essential for the catalytic activity and assembly of complex I. This chain is NADH-ubiquinone oxidoreductase chain 2, found in Mus musculus (Mouse).